Consider the following 353-residue polypeptide: UPF0283 membrane protein YcjF (353 aa).

A run of 3 helical transmembrane segments spans residues 70 to 90, 100 to 120, and 213 to 233; these read MVMG…VQWT, VALG…GSVV, and ESTL…FIAW.

It belongs to the UPF0283 family.

The protein localises to the cell inner membrane. This Escherichia coli O127:H6 (strain E2348/69 / EPEC) protein is UPF0283 membrane protein YcjF.